A 154-amino-acid chain; its full sequence is MSKMVMLLSSDGESFQVEEAVAVQSQTIAHMIEDDCVANGVPIANVTGVILSKVIEYCKKHVVSDSPTEESKDELKKWDAEFMKALEQSSTLFDVMLAANYLNIKDLLDLGCQTVADMITGKKPDEIRALLGIENDFTPEEEEEIRKENQWAFE.

Positions 96–154 (MLAANYLNIKDLLDLGCQTVADMITGKKPDEIRALLGIENDFTPEEEEEIRKENQWAFE) are interaction with the F-box domain of F-box proteins.

This sequence belongs to the SKP1 family. As to quaternary structure, part of a SCF (SKP1-cullin-F-box) protein ligase complex. Interacts with ADO3/FKF1, EBF1, PP2A13, SKIP15, SKIP16, CPR1/CPR30, At1g55000, At3g61590, At1g67340, At1g78100, At3g04660, At4g38940, At4g39550 and At5g49610. In terms of tissue distribution, mostly expressed in inflorescences, and, to a lower extent, in seedlings and siliques. Also detected in cotyledons, leaves, pollen and seeds.

The protein localises to the nucleus. It functions in the pathway protein modification; protein ubiquitination. Its function is as follows. Involved in ubiquitination and subsequent proteasomal degradation of target proteins. Together with CUL1, RBX1 and a F-box protein, it forms a SCF E3 ubiquitin ligase complex. The functional specificity of this complex depends on the type of F-box protein. In the SCF complex, it serves as an adapter that links the F-box protein to CUL1. The sequence is that of SKP1-like protein 13 (ASK13) from Arabidopsis thaliana (Mouse-ear cress).